A 321-amino-acid polypeptide reads, in one-letter code: Polyprenyl transferase cle5 (321 aa).

9 helical membrane passes run 26 to 46 (PLLA…HKIT), 57 to 77 (VLSQ…AGMV), 107 to 127 (EALV…SWML), 132 to 149 (VQAA…YPFA), 159 to 179 (IYPQ…GTLA), 189 to 209 (LWAS…WTLY), 232 to 252 (VLAG…VLGA), 262 to 282 (SQWL…GQLV), and 300 to 320 (FALG…GGNG).

It belongs to the UbiA prenyltransferase family. Mg(2+) is required as a cofactor.

Its subcellular location is the membrane. It participates in secondary metabolite biosynthesis; terpenoid biosynthesis. In terms of biological role, polyprenyl transferase; part of the cluster A that mediates the biosynthesis of chevalone E and its oxidized derivatives that possess a unique five-membered lactone ring and can synergistically enhance the cytotoxicity of doxorubicin (DOX) in breast cancer cells. Within the pathway, cle5 takes part to the biosynthesis of the molecular scaffold by catalyzing the C-3 geranylgeranylation reaction of triacetic acid lactone (TAL) produced by cle1. The molecular scaffold is commonly biosynthesized by a series of enzymes including the non-reducing polyketide synthase (NR-PKS) cle1 that produces the alpha-pyrone triacetic acid lactone (TAL); The membrane-bound prenyltransferase cle5 that accepts TAL as its substrate to perform a C-3 geranylgeranylation reaction, in which the pathway-dedicated GGPS cle6 is required to provide GGPP, the other substrate of cle5; the FAD-dependent monooxygenase Cle3 that forms an (S)-epoxide ring at the terminal olefin of the geranylgeranyl group; and the terpene cyclase Cle7 that catalyzes the cyclization of the prenyl group that yields the pentacyclic pathway intermediate chevalone E. Chevalone E can derivatize into seven new oxidized analogs by the cytochrome P450 monooxygenases cle2 (acting at C-20) and cle4 (acting at C-11 and C-12). This chain is Polyprenyl transferase cle5, found in Aspergillus versicolor.